The primary structure comprises 320 residues: o-succinylbenzoate synthase (320 aa).

K133 functions as the Proton donor in the catalytic mechanism. D161, E190, and D213 together coordinate Mg(2+). K235 functions as the Proton acceptor in the catalytic mechanism.

Belongs to the mandelate racemase/muconate lactonizing enzyme family. MenC type 1 subfamily. A divalent metal cation serves as cofactor.

The catalysed reaction is (1R,6R)-6-hydroxy-2-succinyl-cyclohexa-2,4-diene-1-carboxylate = 2-succinylbenzoate + H2O. It participates in quinol/quinone metabolism; 1,4-dihydroxy-2-naphthoate biosynthesis; 1,4-dihydroxy-2-naphthoate from chorismate: step 4/7. It functions in the pathway quinol/quinone metabolism; menaquinone biosynthesis. Converts 2-succinyl-6-hydroxy-2,4-cyclohexadiene-1-carboxylate (SHCHC) to 2-succinylbenzoate (OSB). The protein is o-succinylbenzoate synthase of Salmonella arizonae (strain ATCC BAA-731 / CDC346-86 / RSK2980).